The chain runs to 682 residues: Actin-binding LIM protein 3 (682 aa).

Residue Met-1 is modified to N-acetylmethionine. 4 LIM zinc-binding domains span residues 21–80 (IQCY…LYGT), 80–140 (TRCD…MTSS), 149–208 (SHCA…QFGI), and 208–268 (IKCE…ARAE). Residues Ser-277, Ser-280, Ser-282, Ser-286, Ser-290, Ser-337, Ser-372, and Ser-373 each carry the phosphoserine modification. Disordered regions lie at residues 372-426 (SSPG…SYQA) and 440-475 (YRKP…PAYS). Phosphotyrosine is present on Tyr-376. Ser-379 and Ser-388 each carry phosphoserine. Composition is skewed to polar residues over residues 380-393 (PTYS…TFSR), 405-425 (GRSS…TSYQ), and 453-466 (STAT…DISQ). Phosphoserine is present on residues Ser-492, Ser-502, and Ser-503. Position 542 is a phosphothreonine (Thr-542). Residues Ser-566, Ser-575, and Ser-606 each carry the phosphoserine modification. Positions 614–682 (MREYKIYPYE…NELKKQARLF (69 aa)) constitute an HP domain. An Omega-N-methylarginine modification is found at Arg-630.

As to quaternary structure, directly interacts with F-actin and ABRA. Expressed in heart, brain, lung and liver. In the brain, highly expressed in the olfactory bulb. In the hippocampus, expressed selectively in the CA2 and CA3 fields. In the cerebellum, expressed in internal granular cells.

It is found in the cytoplasm. In terms of biological role, may act as scaffold protein. May stimulate ABRA activity and ABRA-dependent SRF transcriptional activity. This Mus musculus (Mouse) protein is Actin-binding LIM protein 3 (Ablim3).